The sequence spans 338 residues: Methionine import ATP-binding protein MetN (338 aa).

Residues 2–241 form the ABC transporter domain; the sequence is ISLDGIRKVF…PKEHITKEFV (240 aa). 38-45 serves as a coordination point for ATP; sequence GYSGAGKS.

It belongs to the ABC transporter superfamily. Methionine importer (TC 3.A.1.24) family. As to quaternary structure, the complex is composed of two ATP-binding proteins (MetN), two transmembrane proteins (MetI) and a solute-binding protein (MetQ).

It localises to the cell membrane. The enzyme catalyses L-methionine(out) + ATP + H2O = L-methionine(in) + ADP + phosphate + H(+). It catalyses the reaction D-methionine(out) + ATP + H2O = D-methionine(in) + ADP + phosphate + H(+). Part of the ABC transporter complex MetNIQ involved in methionine import. Responsible for energy coupling to the transport system. In Halalkalibacterium halodurans (strain ATCC BAA-125 / DSM 18197 / FERM 7344 / JCM 9153 / C-125) (Bacillus halodurans), this protein is Methionine import ATP-binding protein MetN.